The sequence spans 294 residues: Methionine aminopeptidase (294 aa).

A substrate-binding site is contributed by His-65. A divalent metal cation-binding residues include Asp-85, Asp-96, and His-156. His-164 contributes to the substrate binding site. A divalent metal cation is bound by residues Glu-189 and Glu-279.

The protein belongs to the peptidase M24A family. Methionine aminopeptidase archaeal type 2 subfamily. As to quaternary structure, monomer. Co(2+) is required as a cofactor. The cofactor is Zn(2+). It depends on Mn(2+) as a cofactor. Fe(2+) serves as cofactor.

The catalysed reaction is Release of N-terminal amino acids, preferentially methionine, from peptides and arylamides.. Its function is as follows. Removes the N-terminal methionine from nascent proteins. The N-terminal methionine is often cleaved when the second residue in the primary sequence is small and uncharged (Met-Ala-, Cys, Gly, Pro, Ser, Thr, or Val). In Methanocaldococcus jannaschii (strain ATCC 43067 / DSM 2661 / JAL-1 / JCM 10045 / NBRC 100440) (Methanococcus jannaschii), this protein is Methionine aminopeptidase.